The chain runs to 246 residues: tRNA pseudouridine synthase A (246 aa).

The active-site Nucleophile is the aspartate 53. Residue tyrosine 111 participates in substrate binding.

It belongs to the tRNA pseudouridine synthase TruA family. As to quaternary structure, homodimer.

It catalyses the reaction uridine(38/39/40) in tRNA = pseudouridine(38/39/40) in tRNA. Functionally, formation of pseudouridine at positions 38, 39 and 40 in the anticodon stem and loop of transfer RNAs. The chain is tRNA pseudouridine synthase A from Anoxybacillus flavithermus (strain DSM 21510 / WK1).